The following is a 434-amino-acid chain: D-amino acid dehydrogenase (434 aa).

3-17 lines the FAD pocket; sequence VLVLGSGVIGTASAY.

This sequence belongs to the DadA oxidoreductase family. FAD serves as cofactor.

The enzyme catalyses a D-alpha-amino acid + A + H2O = a 2-oxocarboxylate + AH2 + NH4(+). Its pathway is amino-acid degradation; D-alanine degradation; NH(3) and pyruvate from D-alanine: step 1/1. In terms of biological role, oxidative deamination of D-amino acids. In Pseudomonas putida (strain ATCC 700007 / DSM 6899 / JCM 31910 / BCRC 17059 / LMG 24140 / F1), this protein is D-amino acid dehydrogenase.